Reading from the N-terminus, the 1368-residue chain is DNA-directed RNA polymerase subunit beta (1368 aa).

It belongs to the RNA polymerase beta chain family. The RNAP catalytic core consists of 2 alpha, 1 beta, 1 beta' and 1 omega subunit. When a sigma factor is associated with the core the holoenzyme is formed, which can initiate transcription.

It catalyses the reaction RNA(n) + a ribonucleoside 5'-triphosphate = RNA(n+1) + diphosphate. Its function is as follows. DNA-dependent RNA polymerase catalyzes the transcription of DNA into RNA using the four ribonucleoside triphosphates as substrates. The chain is DNA-directed RNA polymerase subunit beta from Herminiimonas arsenicoxydans.